The chain runs to 595 residues: Aspartate--tRNA(Asp/Asn) ligase (595 aa).

Glutamate 175 lines the L-aspartate pocket. Residues 199-202 (QQYK) are aspartate. Residues arginine 221 and histidine 454 each contribute to the L-aspartate site. 221-223 (RDE) contributes to the ATP binding site. Residue glutamate 488 coordinates ATP. L-aspartate is bound at residue arginine 495. Position 540 to 543 (540 to 543 (GIDR)) interacts with ATP.

This sequence belongs to the class-II aminoacyl-tRNA synthetase family. Type 1 subfamily. Homodimer.

It is found in the cytoplasm. The enzyme catalyses tRNA(Asx) + L-aspartate + ATP = L-aspartyl-tRNA(Asx) + AMP + diphosphate. Functionally, aspartyl-tRNA synthetase with relaxed tRNA specificity since it is able to aspartylate not only its cognate tRNA(Asp) but also tRNA(Asn). Reaction proceeds in two steps: L-aspartate is first activated by ATP to form Asp-AMP and then transferred to the acceptor end of tRNA(Asp/Asn). The polypeptide is Aspartate--tRNA(Asp/Asn) ligase (Brucella canis (strain ATCC 23365 / NCTC 10854 / RM-666)).